Consider the following 1485-residue polypeptide: Cystic fibrosis transmembrane conductance regulator (1485 aa).

The Cytoplasmic segment spans residues 1–78 (MQRSPVEDAN…SLLRAMARCY (78 aa)). A helical transmembrane segment spans residues 79–99 (IKPFLLFGFLLYIGEATKTVQ). In terms of domain architecture, ABC transmembrane type-1 1 spans 83–353 (LLFGFLLYIG…CMVLRMTVTR (271 aa)). The Extracellular segment spans residues 100 to 123 (PQLLGRIIASFDPAHEPERANGYF). Residues 124–149 (LAFGLGLLFTARFLLLQPAMFGLHHL) traverse the membrane as a helical segment. The Cytoplasmic segment spans residues 150-195 (GMQIRIALFSIIYKKTLKLSSRVLDKISTGQLVSLMSANLGKFDQS). A helical membrane pass occupies residues 196–216 (LGMAHFIWISPLQCILCTGLI). Topologically, residues 217–224 (WELIDVNS) are extracellular. A helical membrane pass occupies residues 225 to 245 (FCALAAISLLGVLQAFLSHKM). Topologically, residues 246–299 (GPYKAQKVLLTNKRLALTSEIMENLHSVKAYGWEEIMETLIKNIRQDEVKLTRK) are cytoplasmic. Residues 300 to 320 (IGSLRYFYSSAYFFSAIFVIV) traverse the membrane as a helical segment. The Extracellular segment spans residues 321–340 (AAVVPHALSRGINLRRIFTT). Residues 341-363 (LSYCMVLRMTVTRQLPGSIQMWY) traverse the membrane as a helical segment. The Cytoplasmic segment spans residues 364–856 (DTMRLIWKIE…YVRYVSNNKS (493 aa)). Residues Trp-402, 457 to 464 (GSMGSGKS), and Gln-492 each bind ATP. The 222-residue stretch at 424-645 (NGDAGLFFTN…RPDFSSLLLG (222 aa)) folds into the ABC transporter 1 domain. The disordered R region stretch occupies residues 653-826 (SAERRCSILT…GILEEENIEA (174 aa)). Residues 857–877 (LLYVLIFILFIAAIEIAGSVA) form a helical membrane-spanning segment. The ABC transmembrane type-1 2 domain maps to 860–1163 (VLIFILFIAA…CVATSIAVDG (304 aa)). Over 878–924 (GIFLITDELWREEHQRSEPNMTKHSNASSSGQTYAITVTPTSSYYIL) the chain is Extracellular. N-linked (GlcNAc...) asparagine glycosylation is found at Asn-897 and Asn-903. Residues 925–946 (YIYVATSESLLAMGFFRGLPFV) form a discontinuously helical membrane-spanning segment. The Cytoplasmic segment spans residues 947–996 (HTTITISKKLHQKMLHAVLSAPMSVLNTMKTGRIMNRFTKDMATIDDMLP). A helical transmembrane segment spans residues 997 to 1019 (LLMFDFVQLTVVVVGCILVVSIV). At 1020 to 1021 (RP) the chain is on the extracellular side. Residues 1022 to 1042 (YIFLAATPLAIIFIVMRKYFL) traverse the membrane as a helical segment. The Cytoplasmic segment spans residues 1043-1103 (RTGQQLKQLE…TATWFLYLST (61 aa)). The helical transmembrane segment at 1104–1124 (LRWFLFRADILFVFFFTLAAW) threads the bilayer. Residues 1125-1138 (IAVGTNQDKPGEIG) are Extracellular-facing. The helical transmembrane segment at 1139 to 1159 (IIICLAMLILGTFQWCVATSI) threads the bilayer. The Cytoplasmic segment spans residues 1160–1485 (AVDGMMRSVD…AEDNIQDTRL (326 aa)). Residues 1211-1444 (IEVRNLTVKY…TSHLKQAISP (234 aa)) form the ABC transporter 2 domain. ATP-binding positions include Tyr-1220 and 1245 to 1252 (GRTGSGKS). The interval 1452–1485 (PRRNSSMRTPQSKLSSVTQTLQEEAEDNIQDTRL) is disordered. The segment covering 1454 to 1473 (RNSSMRTPQSKLSSVTQTLQ) has biased composition (polar residues). The span at 1474-1485 (EEAEDNIQDTRL) shows a compositional bias: acidic residues. Residues 1483 to 1485 (TRL) carry the PDZ-binding motif.

This sequence belongs to the ABC transporter superfamily. ABCC family. CFTR transporter (TC 3.A.1.202) subfamily. Monomer; does not require oligomerization for channel activity. Interacts with cse1l; this interaction may down-regulate cftr activity. Post-translationally, phosphorylated; this activates the channel. Dephosphorylation strongly decreases ATPase activity. Phosphorylation at PKA sites activates the channel. Phosphorylation at PKC sites enhances the response to phosphorylation by PKA. Detected in gut epithelium (at protein level). Detected in kidney, spleen, intestine and liver. Detected in pancreatic duct epithelium at 5 dpf and throughout adult life.

The protein resides in the apical cell membrane. It is found in the early endosome membrane. Its subcellular location is the cell membrane. It localises to the recycling endosome membrane. The protein localises to the endoplasmic reticulum membrane. It carries out the reaction ATP + H2O + closed Cl(-) channel = ADP + phosphate + open Cl(-) channel.. It catalyses the reaction chloride(in) = chloride(out). The catalysed reaction is hydrogencarbonate(in) = hydrogencarbonate(out). The enzyme catalyses ATP + H2O = ADP + phosphate + H(+). Its function is as follows. Epithelial ion channel that plays an important role in the regulation of epithelial ion and water transport and fluid homeostasis. Mediates the transport of chloride ions across the cell membrane. Possesses an intrinsic ATPase activity and utilizes ATP to gate its channel; the passive flow of anions through the channel is gated by cycles of ATP binding and hydrolysis by the ATP-binding domains. The ion channel is also permeable to HCO(3)(-); selectivity depends on the extracellular chloride concentration. Exerts its function also by modulating the activity of other ion channels and transporters. Contributes to the regulation of the pH and the ion content of the epithelial fluid layer. Required for normal fluid homeostasis in the gut. Required for normal volume expansion and cell shape changes of Kupffer's vesicle during embryonic development and for normal establishment of left-right body patterning. Required for normal resistance to infection by P.aeruginosa strain PA14 and strain SMC573. The chain is Cystic fibrosis transmembrane conductance regulator from Danio rerio (Zebrafish).